The sequence spans 471 residues: UTP--glucose-1-phosphate uridylyltransferase (471 aa).

UTP-binding positions include 87 to 90 (LNGG), Lys-101, Gln-164, and Gly-193. Substrate is bound at residue 89–90 (GG). Substrate contacts are provided by residues His-194 and 222-224 (NSD). UTP is bound by residues Asp-224 and Lys-362.

Belongs to the UDPGP type 1 family.

It is found in the cytoplasm. It carries out the reaction alpha-D-glucose 1-phosphate + UTP + H(+) = UDP-alpha-D-glucose + diphosphate. Functionally, plays a central role as a glucosyl donor in cellular metabolic pathways. This is UTP--glucose-1-phosphate uridylyltransferase (UGP) from Astragalus penduliflorus (Mountain lentil).